The sequence spans 248 residues: uncharacterized protein (248 aa).

9–33 is a binding site for NADP(+); that stretch reads IITGASSGIGEATAILLAEKGAKLV. Substrate is bound at residue S141. The active-site Proton acceptor is Y154.

It belongs to the short-chain dehydrogenases/reductases (SDR) family.

This is an uncharacterized protein from Listeria innocua serovar 6a (strain ATCC BAA-680 / CLIP 11262).